A 158-amino-acid polypeptide reads, in one-letter code: Transcription elongation factor GreA (158 aa).

Residues 45–72 (AEYHAAREQQSFIEGRIKQLEGELSHAE) adopt a coiled-coil conformation.

This sequence belongs to the GreA/GreB family.

Its function is as follows. Necessary for efficient RNA polymerase transcription elongation past template-encoded arresting sites. The arresting sites in DNA have the property of trapping a certain fraction of elongating RNA polymerases that pass through, resulting in locked ternary complexes. Cleavage of the nascent transcript by cleavage factors such as GreA or GreB allows the resumption of elongation from the new 3'terminus. GreA releases sequences of 2 to 3 nucleotides. This Xylella fastidiosa (strain M12) protein is Transcription elongation factor GreA.